A 266-amino-acid chain; its full sequence is Undecaprenyl-diphosphatase 1 (266 aa).

A run of 8 helical transmembrane segments spans residues 1-21, 39-59, 83-103, 113-133, 141-161, 189-209, 218-238, and 244-264; these read MSII…FLPI, QGLA…VIYF, SKLG…GLLL, SAWV…YADA, IYQL…VAMI, FLLA…ELAL, TLLL…YMFL, and MGML…IVFL.

This sequence belongs to the UppP family.

The protein localises to the cell inner membrane. The catalysed reaction is di-trans,octa-cis-undecaprenyl diphosphate + H2O = di-trans,octa-cis-undecaprenyl phosphate + phosphate + H(+). Catalyzes the dephosphorylation of undecaprenyl diphosphate (UPP). Confers resistance to bacitracin. The sequence is that of Undecaprenyl-diphosphatase 1 from Pseudoalteromonas translucida (strain TAC 125).